The sequence spans 619 residues: Xyloglucan galactosyltransferase MUR3 (619 aa).

The disordered stretch occupies residues 1–26 (MFPRVSMRRRSAEVSPTEPMEKGNGK). Residues 1 to 33 (MFPRVSMRRRSAEVSPTEPMEKGNGKNQTNRIC) are Cytoplasmic-facing. Residues 34-54 (LLVALSLFFWALLLYFHFVVL) form a helical; Signal-anchor for type II membrane protein membrane-spanning segment. Residues 55-619 (GTSNIDKQLQ…WKSEQRDKTQ (565 aa)) are Lumenal-facing. 7 N-linked (GlcNAc...) asparagine glycosylation sites follow: Asn116, Asn146, Asn231, Asn257, Asn319, Asn465, and Asn482. Residues 576–619 (HVWDPFFSKPKPGEDGSSDGNGGTTISADAAKNSWKSEQRDKTQ) are disordered. The segment covering 610 to 619 (WKSEQRDKTQ) has biased composition (basic and acidic residues).

This sequence belongs to the glycosyltransferase 47 family. In terms of assembly, interacts with CSLC4 and FUT1. In terms of tissue distribution, ubiquitous.

It is found in the golgi apparatus. Its subcellular location is the golgi stack membrane. The protein resides in the golgi apparatus membrane. Involved in the attachment of the Gal residue on the third xylosyl unit within the XXXG core structure of xyloglucan, the principal glycan that interlaces the cellulose microfibrils in plant cell wall. Associates with other xyloglucan-synthesizing enzymes to form multiprotein complexes for xyloglucan synthesis in the Golgi. Interacts with actin and is required for the proper endomembrane organization and for the cell elongation. Not involved in the trafficking from the endoplasmic reticulum to the vacuoles. Involved in salt stress tolerance. Participates in the control of the expression of genes encoding for proteins involved in reactive oxygen species (ROS) detoxification under salt stress. May contribute to the maintenance of the proper organization of actin microfilaments during salt stress-induced ROS production. The sequence is that of Xyloglucan galactosyltransferase MUR3 from Arabidopsis thaliana (Mouse-ear cress).